We begin with the raw amino-acid sequence, 369 residues long: Cytokine receptor common subunit gamma (369 aa).

An N-terminal signal peptide occupies residues 1–22; it reads MLKLLLSPRSFLVLQLLLLRAG. Residues 23–263 lie on the Extracellular side of the membrane; the sequence is WSSKVLMSSA…ENPSLFALEA (241 aa). A disulfide bond links cysteine 62 and cysteine 72. Residues asparagine 71, asparagine 75, asparagine 84, and asparagine 96 are each glycosylated (N-linked (GlcNAc...) asparagine). An intrachain disulfide couples cysteine 102 to cysteine 115. The 99-residue stretch at 156–254 folds into the Fibronectin type-III domain; sequence APENLTLSNL…VHWGSHTVEE (99 aa). N-linked (GlcNAc...) asparagine glycans are attached at residues asparagine 159 and asparagine 164. The WSXWS motif motif lies at 238–242; that stretch reads WSKWS. Residues 264–284 form a helical membrane-spanning segment; it reads VLIPVGTMGLIITLIFVYCWL. Topologically, residues 285-369 are cytoplasmic; sequence ERMPPIPPIK…PPCYSLKPEA (85 aa). Residues 286–294 carry the Box 1 motif motif; it reads RMPPIPPIK.

Belongs to the type I cytokine receptor family. Type 5 subfamily. In terms of assembly, the gamma subunit is common to the IL2, IL4, IL7, IL15, IL21 and probably also the IL13 receptors. Interacts with SHB upon interleukin stimulation. Interacts with IL9.

It localises to the cell membrane. The protein localises to the cell surface. Its function is as follows. Common subunit for the receptors for a variety of interleukins. Probably in association with IL15RA, involved in the stimulation of neutrophil phagocytosis by IL15. This chain is Cytokine receptor common subunit gamma (Il2rg), found in Mus musculus (Mouse).